Here is a 946-residue protein sequence, read N- to C-terminus: Bifunctional glutamine synthetase adenylyltransferase/adenylyl-removing enzyme (946 aa).

The adenylyl removase stretch occupies residues methionine 1 to glutamate 440. The segment at serine 449–glutamate 946 is adenylyl transferase.

Belongs to the GlnE family. It depends on Mg(2+) as a cofactor.

It catalyses the reaction [glutamine synthetase]-O(4)-(5'-adenylyl)-L-tyrosine + phosphate = [glutamine synthetase]-L-tyrosine + ADP. It carries out the reaction [glutamine synthetase]-L-tyrosine + ATP = [glutamine synthetase]-O(4)-(5'-adenylyl)-L-tyrosine + diphosphate. Functionally, involved in the regulation of glutamine synthetase GlnA, a key enzyme in the process to assimilate ammonia. When cellular nitrogen levels are high, the C-terminal adenylyl transferase (AT) inactivates GlnA by covalent transfer of an adenylyl group from ATP to specific tyrosine residue of GlnA, thus reducing its activity. Conversely, when nitrogen levels are low, the N-terminal adenylyl removase (AR) activates GlnA by removing the adenylyl group by phosphorolysis, increasing its activity. The regulatory region of GlnE binds the signal transduction protein PII (GlnB) which indicates the nitrogen status of the cell. The sequence is that of Bifunctional glutamine synthetase adenylyltransferase/adenylyl-removing enzyme from Escherichia coli O127:H6 (strain E2348/69 / EPEC).